The primary structure comprises 304 residues: Fluoroacetate dehalogenase (304 aa).

The AB hydrolase-1 domain occupies 26 to 151 (PALLLLHGFP…FVARAYWHWY (126 aa)). The active-site Nucleophile is Asp-104. 5 residues coordinate fluoroacetate: Arg-105, Arg-108, His-149, Trp-150, and Tyr-212. Residue His-271 is the Proton acceptor of the active site.

It belongs to the AB hydrolase superfamily. Epoxide hydrolase family. Homodimer.

It catalyses the reaction a haloacetate + H2O = a halide anion + glycolate + H(+). The enzyme catalyses fluoroacetate + H2O = fluoride + glycolate + H(+). Its function is as follows. Catalyzes the hydrolytic defluorination of fluoroacetate to produce glycolate. Has only very low activity towards chloroacetate and bromoacetate. The sequence is that of Fluoroacetate dehalogenase (fac-dex) from Burkholderia sp.